An 802-amino-acid polypeptide reads, in one-letter code: Oleate activated transcription factor 3 (802 aa).

Residues 19 to 47 (CTNCKKRKSKCDRGKPCSNCTRIGIENSC) constitute a DNA-binding region (zn(2)-C6 fungal-type). A compositionally biased stretch (polar residues) spans 749 to 768 (TSQQDSLASAGTNRTNNIAT). The tract at residues 749-779 (TSQQDSLASAGTNRTNNIATNSGSGDDGGNG) is disordered.

This sequence belongs to the OAF3 family.

The protein resides in the cytoplasm. Its subcellular location is the nucleus. It localises to the mitochondrion. Functionally, transcriptional inhibitor with a significantly increased number of target genes in response to oleate. This Vanderwaltozyma polyspora (strain ATCC 22028 / DSM 70294 / BCRC 21397 / CBS 2163 / NBRC 10782 / NRRL Y-8283 / UCD 57-17) (Kluyveromyces polysporus) protein is Oleate activated transcription factor 3 (OAF3).